Here is a 61-residue protein sequence, read N- to C-terminus: Protein translocase subunit SecE (61 aa).

A helical transmembrane segment spans residues Gly-38–Val-58.

It belongs to the SecE/SEC61-gamma family. Component of the Sec protein translocase complex. Heterotrimer consisting of SecY (alpha), SecG (beta) and SecE (gamma) subunits. The heterotrimers can form oligomers, although 1 heterotrimer is thought to be able to translocate proteins. Interacts with the ribosome. May interact with SecDF, and other proteins may be involved.

It localises to the cell membrane. Functionally, essential subunit of the Sec protein translocation channel SecYEG. Clamps together the 2 halves of SecY. May contact the channel plug during translocation. The sequence is that of Protein translocase subunit SecE from Thermococcus kodakarensis (strain ATCC BAA-918 / JCM 12380 / KOD1) (Pyrococcus kodakaraensis (strain KOD1)).